Consider the following 301-residue polypeptide: Formamidopyrimidine-DNA glycosylase (301 aa).

The active-site Schiff-base intermediate with DNA is P2. E3 acts as the Proton donor in catalysis. Residue K58 is the Proton donor; for beta-elimination activity of the active site. Positions 109, 131, and 174 each coordinate DNA. The FPG-type zinc finger occupies 265–301 (SVYDREGQACRTPGCGGTVARIVQAGRSTFYCATCQK). The active-site Proton donor; for delta-elimination activity is R291.

The protein belongs to the FPG family. As to quaternary structure, monomer. Zn(2+) is required as a cofactor.

It catalyses the reaction Hydrolysis of DNA containing ring-opened 7-methylguanine residues, releasing 2,6-diamino-4-hydroxy-5-(N-methyl)formamidopyrimidine.. It carries out the reaction 2'-deoxyribonucleotide-(2'-deoxyribose 5'-phosphate)-2'-deoxyribonucleotide-DNA = a 3'-end 2'-deoxyribonucleotide-(2,3-dehydro-2,3-deoxyribose 5'-phosphate)-DNA + a 5'-end 5'-phospho-2'-deoxyribonucleoside-DNA + H(+). Involved in base excision repair of DNA damaged by oxidation or by mutagenic agents. Acts as a DNA glycosylase that recognizes and removes damaged bases. Has a preference for oxidized purines, such as 7,8-dihydro-8-oxoguanine (8-oxoG). Has AP (apurinic/apyrimidinic) lyase activity and introduces nicks in the DNA strand. Cleaves the DNA backbone by beta-delta elimination to generate a single-strand break at the site of the removed base with both 3'- and 5'-phosphates. In Rhizobium leguminosarum bv. trifolii (strain WSM2304), this protein is Formamidopyrimidine-DNA glycosylase.